Consider the following 176-residue polypeptide: Peptide methionine sulfoxide reductase MsrA (176 aa).

Residue cysteine 10 is part of the active site.

This sequence belongs to the MsrA Met sulfoxide reductase family.

The enzyme catalyses L-methionyl-[protein] + [thioredoxin]-disulfide + H2O = L-methionyl-(S)-S-oxide-[protein] + [thioredoxin]-dithiol. The catalysed reaction is [thioredoxin]-disulfide + L-methionine + H2O = L-methionine (S)-S-oxide + [thioredoxin]-dithiol. In terms of biological role, has an important function as a repair enzyme for proteins that have been inactivated by oxidation. Catalyzes the reversible oxidation-reduction of methionine sulfoxide in proteins to methionine. This Leptospira borgpetersenii serovar Hardjo-bovis (strain JB197) protein is Peptide methionine sulfoxide reductase MsrA.